Reading from the N-terminus, the 609-residue chain is WD repeat-containing protein 1 (609 aa).

WD repeat units follow at residues 6–47 (EIKK…IRNI), 50–89 (PAIA…IWDT), 95–137 (LLKY…LWDS), 140–178 (SVGE…FFEG), 182–220 (KFKF…IYDG), 226–265 (VCAL…IWDV), 272–308 (STFN…YLDK), 313–353 (KPLR…YWDS), 360–410 (GFSG…KMDV), 434–476 (MKDK…LYSI), 482–520 (KSDD…VFSV), 525–563 (VEHN…VWTV), and 568–606 (TRIK…EWSI).

It belongs to the WD repeat AIP1 family.

The protein resides in the cytoplasm. It is found in the cytoskeleton. Functionally, induces disassembly of actin filaments in conjunction with ADF/cofilin family proteins. Enhances cofilin-mediated actin severing. The polypeptide is WD repeat-containing protein 1 (WDR1) (Gallus gallus (Chicken)).